The chain runs to 322 residues: Transcription initiation factor IIB (322 aa).

A run of 2 repeats spans residues 125–213 (SLIN…VRDL) and 224–305 (NFVY…EIAQ).

It belongs to the TFIIB family.

Functionally, stabilizes TBP binding to an archaeal box-A promoter. Also responsible for recruiting RNA polymerase II to the pre-initiation complex (DNA-TBP-TFIIB). The protein is Transcription initiation factor IIB of Aeropyrum pernix (strain ATCC 700893 / DSM 11879 / JCM 9820 / NBRC 100138 / K1).